The sequence spans 97 residues: Co-chaperonin GroES (97 aa).

Belongs to the GroES chaperonin family. In terms of assembly, heptamer of 7 subunits arranged in a ring. Interacts with the chaperonin GroEL.

Its subcellular location is the cytoplasm. Together with the chaperonin GroEL, plays an essential role in assisting protein folding. The GroEL-GroES system forms a nano-cage that allows encapsulation of the non-native substrate proteins and provides a physical environment optimized to promote and accelerate protein folding. GroES binds to the apical surface of the GroEL ring, thereby capping the opening of the GroEL channel. The chain is Co-chaperonin GroES from Yersinia enterocolitica.